A 146-amino-acid chain; its full sequence is D-aminoacyl-tRNA deacylase (146 aa).

Positions 138-139 match the Gly-cisPro motif, important for rejection of L-amino acids motif; it reads GP.

The protein belongs to the DTD family. Homodimer.

The protein resides in the cytoplasm. It catalyses the reaction glycyl-tRNA(Ala) + H2O = tRNA(Ala) + glycine + H(+). The catalysed reaction is a D-aminoacyl-tRNA + H2O = a tRNA + a D-alpha-amino acid + H(+). Functionally, an aminoacyl-tRNA editing enzyme that deacylates mischarged D-aminoacyl-tRNAs. Also deacylates mischarged glycyl-tRNA(Ala), protecting cells against glycine mischarging by AlaRS. Acts via tRNA-based rather than protein-based catalysis; rejects L-amino acids rather than detecting D-amino acids in the active site. By recycling D-aminoacyl-tRNA to D-amino acids and free tRNA molecules, this enzyme counteracts the toxicity associated with the formation of D-aminoacyl-tRNA entities in vivo and helps enforce protein L-homochirality. The polypeptide is D-aminoacyl-tRNA deacylase (Xanthomonas euvesicatoria pv. vesicatoria (strain 85-10) (Xanthomonas campestris pv. vesicatoria)).